The chain runs to 181 residues: uncharacterized protein (181 aa).

Residues 35-175 (LRHRCVFVWA…ARLRAWRGAS (141 aa)) enclose the Nudix hydrolase domain. The Nudix box motif lies at 72-94 (GGVVGAGESYDDAALREAEEELG). Positions 88 and 92 each coordinate Mg(2+).

It belongs to the Nudix hydrolase family. Requires Mg(2+) as cofactor.

This is an uncharacterized protein from Streptomyces coelicolor (strain ATCC BAA-471 / A3(2) / M145).